Consider the following 466-residue polypeptide: Citrate synthase, mitochondrial (466 aa).

Residues 1–27 (MALLTAAARLLGTKNASCLVLAARHAS) constitute a mitochondrion transit peptide. Residues 2 to 21 (ALLTAAARLLGTKNASCLVL) carry the SIFI-degron motif. An N6-succinyllysine modification is found at Lys-57. Lys-76 carries the post-translational modification N6-acetyllysine; alternate. Lys-76 carries the N6-succinyllysine; alternate modification. Lys-103 and Lys-193 each carry N6-succinyllysine. Residue His-301 is part of the active site. An N6-acetyllysine; alternate mark is found at Lys-321 and Lys-327. Residues Lys-321 and Lys-327 each carry the N6-succinyllysine; alternate modification. Residue His-347 is part of the active site. Arg-356 is an oxaloacetate binding site. At Lys-375 the chain carries N6-acetyllysine; alternate. N6-succinyllysine; alternate is present on Lys-375. N6-acetyllysine is present on Lys-382. Lys-393 is subject to N6-acetyllysine; alternate. Lys-393 is modified (N6-succinyllysine; alternate). The residue at position 395 (Lys-395) is an N6,N6,N6-trimethyllysine. The active site involves Asp-402. Oxaloacetate contacts are provided by Arg-428 and Arg-448. Position 450 is an N6-succinyllysine (Lys-450). N6-acetyllysine; alternate is present on Lys-459. N6-succinyllysine; alternate is present on Lys-459.

The protein belongs to the citrate synthase family. Homodimer. Post-translationally, methylated. Trimethylation at Lys-395 by CSKMT decreases citrate synthase activity. In terms of processing, in response to mitochondrial stress, the precursor protein is ubiquitinated by the SIFI complex in the cytoplasm before mitochondrial import, leading to its degradation. Within the SIFI complex, UBR4 initiates ubiquitin chain that are further elongated or branched by KCMF1.

It is found in the mitochondrion matrix. It carries out the reaction oxaloacetate + acetyl-CoA + H2O = citrate + CoA + H(+). It participates in carbohydrate metabolism; tricarboxylic acid cycle; isocitrate from oxaloacetate: step 1/2. Functionally, key enzyme of the Krebs tricarboxylic acid cycle which catalyzes the synthesis of citrate from acetyl coenzyme A and oxaloacetate. The chain is Citrate synthase, mitochondrial (CS) from Homo sapiens (Human).